Here is a 320-residue protein sequence, read N- to C-terminus: GPI-specific phospholipase A2-like PGAP3 (320 aa).

The first 23 residues, 1–23, serve as a signal peptide directing secretion; the sequence is MAKRTAPLLLLTLAVGLAGGSQG. The Lumenal segment spans residues 24-98; it reads DREPVYRDCV…QFHGKWPFSR (75 aa). The N-linked (GlcNAc...) asparagine glycan is linked to Asn-40. Residues 99 to 119 traverse the membrane as a helical segment; that stretch reads FLFIQEPASAVASLLNGLASL. Residues 120–135 lie on the Cytoplasmic side of the membrane; the sequence is VMLCRYRASVPASSPM. The helical transmembrane segment at 136–156 threads the bilayer; the sequence is YHTCMAFAWVSLNAWFWSTVF. The Lumenal segment spans residues 157-169; that stretch reads HTRDTDLTEKMDY. Residues 170–190 traverse the membrane as a helical segment; the sequence is FCASAVILHSVYLCCVRTVGL. Topologically, residues 191–198 are cytoplasmic; that stretch reads QHPSVASA. The chain crosses the membrane as a helical span at residues 199–219; sequence FGALLLLLLTGHISYLSLVHF. Residues 220–223 are Lumenal-facing; the sequence is DYGY. A helical transmembrane segment spans residues 224 to 244; it reads NMMANVAIGLVNLAWWLVWCL. Residues 245 to 257 lie on the Cytoplasmic side of the membrane; the sequence is RNRQRLPHTRRCM. Residues 258–278 traverse the membrane as a helical segment; it reads VVVVLLQGLSLLELLDFPPLF. Trp-279 is a topological domain (lumenal). Residues 280-299 traverse the membrane as a helical segment; it reads VLDAHAIWHISTIPVHTLFF. The Cytoplasmic portion of the chain corresponds to 300 to 320; that stretch reads RFLEDDSLYLLKESGAMFKLD.

This sequence belongs to the PGAP3 family.

Its subcellular location is the golgi apparatus membrane. Involved in the fatty acid remodeling steps of GPI-anchor maturation where the unsaturated acyl chain at sn-2 of inositol phosphate is replaced by a saturated stearoyl chain. May catalyze the first step of the fatty acid remodeling, by removing the unsaturated acyl chain at sn-2 of inositol phosphate, generating a lyso-GPI intermediate. The fatty acid remodeling steps is critical for the integration of GPI-APs into lipid rafts. This chain is GPI-specific phospholipase A2-like PGAP3, found in Mus musculus (Mouse).